We begin with the raw amino-acid sequence, 616 residues long: Proline--tRNA ligase (616 aa).

Belongs to the class-II aminoacyl-tRNA synthetase family. ProS type 1 subfamily. As to quaternary structure, homodimer.

It localises to the cytoplasm. The catalysed reaction is tRNA(Pro) + L-proline + ATP = L-prolyl-tRNA(Pro) + AMP + diphosphate. Catalyzes the attachment of proline to tRNA(Pro) in a two-step reaction: proline is first activated by ATP to form Pro-AMP and then transferred to the acceptor end of tRNA(Pro). As ProRS can inadvertently accommodate and process non-cognate amino acids such as alanine and cysteine, to avoid such errors it has two additional distinct editing activities against alanine. One activity is designated as 'pretransfer' editing and involves the tRNA(Pro)-independent hydrolysis of activated Ala-AMP. The other activity is designated 'posttransfer' editing and involves deacylation of mischarged Ala-tRNA(Pro). The misacylated Cys-tRNA(Pro) is not edited by ProRS. The polypeptide is Proline--tRNA ligase (Lactococcus lactis subsp. cremoris (strain MG1363)).